The following is a 289-amino-acid chain: Cytochrome bc1 complex cytochrome c subunit (289 aa).

The span at 1–11 (MKKLGFTRSSR) shows a compositional bias: basic residues. The segment at 1–28 (MKKLGFTRSSRRCSQPQEREQESERSRR) is disordered. Residues 37 to 55 (GLLLLVALTVSGGLAAVLT) traverse the membrane as a helical segment. 2 consecutive Cytochrome c domains span residues 69-149 (ALLR…QANG) and 170-248 (TDLG…RTVI). The heme c site is built by C82, C85, H86, C183, C186, and H187. The chain crosses the membrane as a helical span at residues 267 to 287 (GMAIWIIGMVTAIGLALWIGA).

As to quaternary structure, the cytochrome bc1 complex is composed of a cytochrome b (QcrB), the Rieske iron-sulfur protein (QcrA) and a diheme cytochrome c (QcrC) subunit. Post-translationally, binds 2 heme c groups covalently per subunit.

The protein resides in the cell membrane. The catalysed reaction is a quinol + 2 Fe(III)-[cytochrome c](out) = a quinone + 2 Fe(II)-[cytochrome c](out) + 2 H(+)(out). In terms of biological role, cytochrome b subunit of the cytochrome bc1 complex, an essential component of the respiratory electron transport chain required for ATP synthesis. The bc1 complex catalyzes the oxidation of ubiquinol and the reduction of cytochrome c in the respiratory chain. The bc1 complex operates through a Q-cycle mechanism that couples electron transfer to generation of the proton gradient that drives ATP synthesis. The protein is Cytochrome bc1 complex cytochrome c subunit (qcrC) of Mycobacterium leprae (strain TN).